The primary structure comprises 100 residues: MELTPREKDKLLIFTAALLAERRRARGLKLNYPEAVALITAAIMEGARDGRTVAELMHEGTTVLAREDVMDGVAEMIPEIQVEATFPDGTKLVTVHHPIV.

The protein belongs to the urease gamma subunit family. Heterotrimer of UreA (gamma), UreB (beta) and UreC (alpha) subunits. Three heterotrimers associate to form the active enzyme.

Its subcellular location is the cytoplasm. The catalysed reaction is urea + 2 H2O + H(+) = hydrogencarbonate + 2 NH4(+). It functions in the pathway nitrogen metabolism; urea degradation; CO(2) and NH(3) from urea (urease route): step 1/1. The protein is Urease subunit gamma of Cupriavidus metallidurans (strain ATCC 43123 / DSM 2839 / NBRC 102507 / CH34) (Ralstonia metallidurans).